We begin with the raw amino-acid sequence, 230 residues long: Cytidylate kinase (230 aa).

Residue 12 to 20 (GPSGAGKST) coordinates ATP.

This sequence belongs to the cytidylate kinase family. Type 1 subfamily.

The protein localises to the cytoplasm. The catalysed reaction is CMP + ATP = CDP + ADP. The enzyme catalyses dCMP + ATP = dCDP + ADP. This chain is Cytidylate kinase, found in Corynebacterium diphtheriae (strain ATCC 700971 / NCTC 13129 / Biotype gravis).